The chain runs to 408 residues: MSAPASSAPRLRLRVSKAAELHIRDGHPWVYESSVREQNREGEPGELAVVYDRRDRFLAIGLYDPFSPLRLRVLHTGMPTQLDDAWWAARLDAALARRAALFGPLTAFGDTDGYRVLNGESDGFPGLVVDRYAGVLVMKLYTAAWFPHLRRMLELFAARAPDFAVVLRLSRNIAERAADLGLHDGQVIYGELAGDSVVFRESGLRFEAEVRQGQKTGFFLDQRENRRRVEGLSEGRRVLNAFSFSGGFSLYAARGGASEVTSLDISAHALRSAERNFALNPELSAVHKTVQADVFEWLPAGKGSGADYDLVILDPPSLARREAEREGAIRAYGKLAEGGLTRLAPGGILVSASCSAHVSAEEFEEAVMSAVRRSGRRWRKLLSSRHAPDHHASFAEAEYLKAVFLQMD.

This sequence belongs to the methyltransferase superfamily.

It carries out the reaction cytidine(2499) in 23S rRNA + S-adenosyl-L-methionine = 5-methylcytidine(2499) in 23S rRNA + S-adenosyl-L-homocysteine + H(+). Specifically methylates the cytosine at position 2499 (m5C2499) of 23S rRNA. The sequence is that of Ribosomal RNA large subunit methyltransferase DR_0049 from Deinococcus radiodurans (strain ATCC 13939 / DSM 20539 / JCM 16871 / CCUG 27074 / LMG 4051 / NBRC 15346 / NCIMB 9279 / VKM B-1422 / R1).